The following is a 568-amino-acid chain: 3-(3-hydroxy-phenyl)propionate/3-hydroxycinnamic acid hydroxylase (568 aa).

Residues 13-42 (DVVI…IVEE) and 278-288 (FRKGRMFLAGD) contribute to the FAD site.

Belongs to the PheA/TfdB FAD monooxygenase family. FAD is required as a cofactor.

It catalyses the reaction 3-(3-hydroxyphenyl)propanoate + NADH + O2 + H(+) = 3-(2,3-dihydroxyphenyl)propanoate + NAD(+) + H2O. The enzyme catalyses (2E)-3-(3-hydroxyphenyl)prop-2-enoate + NADH + O2 + H(+) = (2E)-3-(2,3-dihydroxyphenyl)prop-2-enoate + NAD(+) + H2O. It participates in aromatic compound metabolism; 3-phenylpropanoate degradation. Its function is as follows. Catalyzes the insertion of one atom of molecular oxygen into position 2 of the phenyl ring of 3-(3-hydroxyphenyl)propionate (3-HPP) and hydroxycinnamic acid (3HCI). This is 3-(3-hydroxy-phenyl)propionate/3-hydroxycinnamic acid hydroxylase from Mycobacterium sp. (strain JLS).